The chain runs to 402 residues: 26S proteasome non-ATPase regulatory subunit 4 homolog (402 aa).

One can recognise a VWFA domain in the interval 5–189 (ATMICIDNSE…LSDVLISTPI (185 aa)). Residues 221 to 240 (NVDPELALALRLSMEEERAR) form the UIM 1 domain. The segment covering 241 to 261 (QEAIAKKAAEESSGAENKDHA) has biased composition (basic and acidic residues). 2 disordered regions span residues 241-292 (QEAI…EDDD) and 302-321 (MSMEEGSSGAAAADAAMAEA). UIM domains follow at residues 291-310 (DDAQLLQQALAMSMEEGSSG) and 323-342 (VDDQDLALALQMSVQDAGGS). A disordered region spans residues 363–402 (SLPGVDPNDPSVKDLLASLHGQGEQEKKEDKSDKPEDEKK). Basic and acidic residues predominate over residues 385-402 (GEQEKKEDKSDKPEDEKK).

Belongs to the proteasome subunit S5A family. As to quaternary structure, component of the 19S regulatory particle (RP/PA700) base subcomplex of the 26S proteasome. The 26S proteasome is composed of a core protease (CP), known as the 20S proteasome, capped at one or both ends by the 19S regulatory particle (RP/PA700). The RP/PA700 complex is composed of at least 17 different subunits in two subcomplexes, the base and the lid, which form the portions proximal and distal to the 20S proteolytic core, respectively. Interacts with PI4KG4.

Functionally, plays a role in maintaining the structural integrity of the 19S regulatory particle (RP), subcomplex of the 26S proteasome. Plays a major role in both the direct and indirect recognition of ubiquitinated substrates of ubiquitin/26S proteasome-mediated proteolysis (UPP). Binds and presumably selects ubiquitin-conjugates for destruction. This is 26S proteasome non-ATPase regulatory subunit 4 homolog from Oryza sativa subsp. japonica (Rice).